The sequence spans 324 residues: MSAAPHASPTTIACLLGPTASGKTAAALALAARRPIEIVSVDSALVYRDMDIGTAKPSRDERASVPHHLIDIIDPADAYSAASFRADTLRLIGEIAARGRTPLLAGGTMLYYKALTQGLNDLPGADPDVRATLDAEAERDGWPALHARLAQVDPDTAARLAPNDSQRIQRALEVFMLSGQPMSVLLAAPRRTDDAAAAYRFVPVALEPSDRAVLHKRIAQRFDAMLDAGFIDEVERLRRREDLHPDLPSMRCVGYRQAWEFLDGDTDYRTMRDKGIFATRQLCKRQITWLRAMPERIVVDCIAPDSTARALDALERVLDGSTPG.

An ATP-binding site is contributed by 17 to 24 (GPTASGKT). A substrate-binding site is contributed by 19-24 (TASGKT). Interaction with substrate tRNA regions lie at residues 42–45 (DSAL), 166–170 (QRIQR), 251–256 (RCVGYR), and 284–291 (KRQITWLR).

It belongs to the IPP transferase family. Monomer. It depends on Mg(2+) as a cofactor.

The catalysed reaction is adenosine(37) in tRNA + dimethylallyl diphosphate = N(6)-dimethylallyladenosine(37) in tRNA + diphosphate. Catalyzes the transfer of a dimethylallyl group onto the adenine at position 37 in tRNAs that read codons beginning with uridine, leading to the formation of N6-(dimethylallyl)adenosine (i(6)A). The sequence is that of tRNA dimethylallyltransferase from Burkholderia lata (strain ATCC 17760 / DSM 23089 / LMG 22485 / NCIMB 9086 / R18194 / 383).